The following is a 409-amino-acid chain: Peptidase T (409 aa).

Histidine 78 contacts Zn(2+). Residue aspartate 80 is part of the active site. Residue aspartate 140 coordinates Zn(2+). Glutamate 173 (proton acceptor) is an active-site residue. Zn(2+)-binding residues include glutamate 174, aspartate 196, and histidine 379.

It belongs to the peptidase M20B family. The cofactor is Zn(2+).

Its subcellular location is the cytoplasm. It carries out the reaction Release of the N-terminal residue from a tripeptide.. Its function is as follows. Cleaves the N-terminal amino acid of tripeptides. In Escherichia coli O139:H28 (strain E24377A / ETEC), this protein is Peptidase T.